The following is a 444-amino-acid chain: Nuclear envelope integral membrane protein 1 (444 aa).

An N-terminal signal peptide occupies residues 1–43 (MAGGMKVAVSPAVGPGPWGSGVGGGGTVRLLLILSGCLVYGTA). Residue N125 is glycosylated (N-linked (GlcNAc...) asparagine). Transmembrane regions (helical) follow at residues 161–181 (PKLF…DLLS), 186–206 (FYYS…IIFI), 216–236 (PIYV…QLVF), 245–265 (CYWQ…FAVC), and 289–309 (LCFM…IIIA). The tract at residues 186-297 (FYYSTGMSVG…GLCFMYSGIQ (112 aa)) is a; required for its colocalization with lamins at the nuclear envelope. The segment at 336–405 (PVPPRLLTEE…LTPNEVSVHE (70 aa)) is b; required for interaction with RAN-GTP. Residues 336–444 (PVPPRLLTEE…PAITQNNFLT (109 aa)) form a required for nuclear localization region. Phosphoserine occurs at positions 368, 424, and 425.

It belongs to the NEMP family. As to quaternary structure, homooligomer. Interacts with RAN-GTP. Interacts with EMD. Post-translationally, phosphorylation may regulate its interaction with RAN-GTP.

The protein localises to the nucleus inner membrane. It is found in the nucleus envelope. Functionally, together with EMD, contributes to nuclear envelope stiffness in germ cells. Required for female fertility. Essential for normal erythropoiesis. Required for efficient nuclear envelope opening and enucleation during the late stages of erythroblast maturation. This chain is Nuclear envelope integral membrane protein 1 (NEMP1), found in Pongo abelii (Sumatran orangutan).